The sequence spans 201 residues: Ribosomal RNA large subunit methyltransferase E (201 aa).

Residues Gly40, Trp42, Asp62, Asp78, and Asp101 each contribute to the S-adenosyl-L-methionine site. Catalysis depends on Lys141, which acts as the Proton acceptor.

It belongs to the class I-like SAM-binding methyltransferase superfamily. RNA methyltransferase RlmE family.

It localises to the cytoplasm. The enzyme catalyses uridine(2552) in 23S rRNA + S-adenosyl-L-methionine = 2'-O-methyluridine(2552) in 23S rRNA + S-adenosyl-L-homocysteine + H(+). In terms of biological role, specifically methylates the uridine in position 2552 of 23S rRNA at the 2'-O position of the ribose in the fully assembled 50S ribosomal subunit. The protein is Ribosomal RNA large subunit methyltransferase E of Anaplasma marginale (strain Florida).